Here is an 883-residue protein sequence, read N- to C-terminus: Translation initiation factor IF-2 (883 aa).

Disordered stretches follow at residues 1–96 (MVDT…RSGM) and 132–259 (QRRA…RGRL). Low complexity predominate over residues 57 to 66 (PAEPAAAAPE). Residues 72 to 87 (TPAPPAVSPRQQPRPS) show a composition bias toward pro residues. Basic and acidic residues predominate over residues 132–188 (QRRAAQELVDKAEREAAEVRRKAEEERHRHEEETKRKAETEAKKRFGEAEPAKKPAD). Positions 191–217 (PASTSTTTTAPRAPVTTTTRPPAVAAE) are enriched in low complexity. Residues 380–551 (PRSPVVTVMG…ALQAELLDLK (172 aa)) enclose the tr-type G domain. The interval 389–396 (GHVDHGKT) is G1. 389-396 (GHVDHGKT) contributes to the GTP binding site. The G2 stretch occupies residues 414 to 418 (GITQH). The interval 437–440 (DTPG) is G3. Residues 437–441 (DTPGH) and 491–494 (NKID) each bind GTP. Positions 491–494 (NKID) are G4. A G5 region spans residues 527–529 (SAK).

The protein belongs to the TRAFAC class translation factor GTPase superfamily. Classic translation factor GTPase family. IF-2 subfamily.

The protein resides in the cytoplasm. Its function is as follows. One of the essential components for the initiation of protein synthesis. Protects formylmethionyl-tRNA from spontaneous hydrolysis and promotes its binding to the 30S ribosomal subunits. Also involved in the hydrolysis of GTP during the formation of the 70S ribosomal complex. This chain is Translation initiation factor IF-2, found in Rhodopseudomonas palustris (strain BisB5).